The chain runs to 348 residues: MSVTYREAGVDIDAGDALVERIKRLAKPTRIPEVLADVGGFAGLCALPGGLSEPVLVSGTDGVGTKLKVAFATGVHDTVGIDLVAMCVNDVLTVGARPLFFLDYFATGKLDVDVGEAVVRGIAEGCKQAGCALIGGETAELPGMYADGEYDLAGFAVGVVERSRILDGKRIAAGDAVIGVASSGLHSNGFSLARRVLEKEMGLTMSDRVADLGGTVGEALLTPTRIYARAITALLAACGDAVRGLSHITGGGLPGNLPRVLPDGLGARLDLGSYQRPAVFQVLQRGGPVEEAEMRRTFNLGVGLVAVVEKGAADRAIEAFAKSGEQAWVLGEVVSVGDVPFEERVLFG.

This sequence belongs to the AIR synthase family.

The protein localises to the cytoplasm. It carries out the reaction 2-formamido-N(1)-(5-O-phospho-beta-D-ribosyl)acetamidine + ATP = 5-amino-1-(5-phospho-beta-D-ribosyl)imidazole + ADP + phosphate + H(+). It participates in purine metabolism; IMP biosynthesis via de novo pathway; 5-amino-1-(5-phospho-D-ribosyl)imidazole from N(2)-formyl-N(1)-(5-phospho-D-ribosyl)glycinamide: step 2/2. The chain is Phosphoribosylformylglycinamidine cyclo-ligase from Sorangium cellulosum (strain So ce56) (Polyangium cellulosum (strain So ce56)).